We begin with the raw amino-acid sequence, 451 residues long: Alpha-galactosidase (451 aa).

An NAD(+)-binding site is contributed by 5-71 (PKITFIGAGS…ASGKITCHTQ (67 aa)). Asn151 serves as a coordination point for substrate. Cys173 lines the Mn(2+) pocket. His174 (proton donor) is an active-site residue. A Mn(2+)-binding site is contributed by His203. Residue Arg287 participates in substrate binding.

Belongs to the glycosyl hydrolase 4 family. Homodimer. The cofactor is NAD(+). Requires Mn(2+) as cofactor.

The catalysed reaction is Hydrolysis of terminal, non-reducing alpha-D-galactose residues in alpha-D-galactosides, including galactose oligosaccharides, galactomannans and galactolipids.. This Escherichia coli (strain K12) protein is Alpha-galactosidase (melA).